The primary structure comprises 321 residues: MRYEQPPGPGIGSTPILSVEGLRKRYGEQTVVDGLSFSVRRGQCFGLLGPNGAGKTTTLRMLLGMTMPDAGTLQLCGETIPGHAHRARMRVGVVPQFDNLDPDFTVSENLQIFGRYFGLPAATIRKRMPGLLEFARLEQKADAPVRALSGGMRRRLTVARSLINDPDVLVMDEPTTGLDPQARHLIWERLRSLLASGKTILLTTHFMEEAERLCDELCVIDNGRKIAQGKPHELITHEIGCDVVEVYGDDLPALRTLLAPLAERVEASGETLFCYARDPQPLVATLRSQTETHAMPGLRYLHRPANLEDVFLRLTGREMRD.

One can recognise an ABC transporter domain in the interval 17–247 (LSVEGLRKRY…EIGCDVVEVY (231 aa)). 49–56 (GPNGAGKT) contributes to the ATP binding site.

This sequence belongs to the ABC transporter superfamily. Lipooligosaccharide exporter (TC 3.A.1.102) family. In terms of assembly, the complex is composed of two ATP-binding proteins (NodI) and two transmembrane proteins (NodJ).

It is found in the cell inner membrane. In terms of biological role, part of the ABC transporter complex NodIJ involved in the export of the nodulation factors (Nod factors), the bacterial signal molecules that induce symbiosis and subsequent nodulation induction. Nod factors are LCO (lipo-chitin oligosaccharide), a modified beta-1,4-linked N-acetylglucosamine oligosaccharide. This subunit is responsible for energy coupling to the transport system. The sequence is that of Nod factor export ATP-binding protein I from Ralstonia nicotianae (strain ATCC BAA-1114 / GMI1000) (Ralstonia solanacearum).